Reading from the N-terminus, the 101-residue chain is NAD(P)H-quinone oxidoreductase subunit 4L, chloroplastic (101 aa).

3 helical membrane passes run 2–22, 32–52, and 61–81; these read ILEH…YGLI, MCLE…SDFF, and IFCI…LAIV.

It belongs to the complex I subunit 4L family. As to quaternary structure, NDH is composed of at least 16 different subunits, 5 of which are encoded in the nucleus.

Its subcellular location is the plastid. It is found in the chloroplast thylakoid membrane. The enzyme catalyses a plastoquinone + NADH + (n+1) H(+)(in) = a plastoquinol + NAD(+) + n H(+)(out). The catalysed reaction is a plastoquinone + NADPH + (n+1) H(+)(in) = a plastoquinol + NADP(+) + n H(+)(out). NDH shuttles electrons from NAD(P)H:plastoquinone, via FMN and iron-sulfur (Fe-S) centers, to quinones in the photosynthetic chain and possibly in a chloroplast respiratory chain. The immediate electron acceptor for the enzyme in this species is believed to be plastoquinone. Couples the redox reaction to proton translocation, and thus conserves the redox energy in a proton gradient. The polypeptide is NAD(P)H-quinone oxidoreductase subunit 4L, chloroplastic (Crucihimalaya wallichii (Rock-cress)).